A 302-amino-acid polypeptide reads, in one-letter code: Sulfate adenylyltransferase subunit 2 (302 aa).

This sequence belongs to the PAPS reductase family. CysD subfamily. As to quaternary structure, heterodimer composed of CysD, the smaller subunit, and CysN.

It carries out the reaction sulfate + ATP + H(+) = adenosine 5'-phosphosulfate + diphosphate. It functions in the pathway sulfur metabolism; hydrogen sulfide biosynthesis; sulfite from sulfate: step 1/3. With CysN forms the ATP sulfurylase (ATPS) that catalyzes the adenylation of sulfate producing adenosine 5'-phosphosulfate (APS) and diphosphate, the first enzymatic step in sulfur assimilation pathway. APS synthesis involves the formation of a high-energy phosphoric-sulfuric acid anhydride bond driven by GTP hydrolysis by CysN coupled to ATP hydrolysis by CysD. This chain is Sulfate adenylyltransferase subunit 2, found in Enterobacter sp. (strain 638).